The chain runs to 86 residues: Mu-theraphotoxin-Hhn1c (86 aa).

The signal sequence occupies residues 1-21 (MKASMFLALAGLALLFVVCYA). The propeptide occupies 22–49 (SESEEKEFSNELLSSVLAVDDNSKGEER). Cystine bridges form between cysteine 51–cysteine 66, cysteine 58–cysteine 73, and cysteine 65–cysteine 80. Position 84 is an isoleucine amide (isoleucine 84).

This sequence belongs to the neurotoxin 10 (Hwtx-1) family. 22 (Htx-4) subfamily. In terms of assembly, monomer. Expressed by the venom gland.

Its subcellular location is the secreted. Its function is as follows. Neurotoxin. Selectively blocks neuronal tetrodotoxin-sensitive voltage-gated sodium channels (Nav). Does not affect tetrodotoxin-resistant voltage-gated sodium channels or calcium channels. This chain is Mu-theraphotoxin-Hhn1c, found in Cyriopagopus hainanus (Chinese bird spider).